The following is a 432-amino-acid chain: Homogentisate 1,2-dioxygenase (432 aa).

The active-site Proton acceptor is His286. His329 and Glu335 together coordinate Fe cation. Positions 344 and 365 each coordinate homogentisate. Position 365 (His365) interacts with Fe cation.

Belongs to the homogentisate dioxygenase family. As to quaternary structure, hexamer; dimer of trimers. Requires Fe cation as cofactor.

It catalyses the reaction homogentisate + O2 = 4-maleylacetoacetate + H(+). The protein operates within amino-acid degradation; L-phenylalanine degradation; acetoacetate and fumarate from L-phenylalanine: step 4/6. Functionally, involved in the catabolism of homogentisate (2,5-dihydroxyphenylacetate or 2,5-OH-PhAc), a central intermediate in the degradation of phenylalanine and tyrosine. Catalyzes the oxidative ring cleavage of the aromatic ring of homogentisate to yield maleylacetoacetate. The chain is Homogentisate 1,2-dioxygenase from Bordetella petrii (strain ATCC BAA-461 / DSM 12804 / CCUG 43448).